We begin with the raw amino-acid sequence, 119 residues long: Membrane-anchored ubiquitin-fold protein 1 (119 aa).

The Ubiquitin-like domain occupies 9–75 (FEIKFRLPDG…LENNKTLSEC (67 aa)). A Cysteine methyl ester modification is found at Cys-116. The S-farnesyl cysteine moiety is linked to residue Cys-116. Positions 117–119 (SIM) are cleaved as a propeptide — removed in mature form.

Its subcellular location is the cell membrane. Its function is as follows. May serve as docking site to facilitate the association of other proteins to the plasma membrane. The protein is Membrane-anchored ubiquitin-fold protein 1 (MUB1) of Oryza sativa subsp. japonica (Rice).